The chain runs to 357 residues: Sorbitol dehydrogenase (357 aa).

An N-acetylalanine modification is found at A2. C45 is a binding site for Zn(2+). Substrate is bound at residue Y51. Positions 70 and 71 each coordinate Zn(2+). E156 contributes to the substrate binding site. Residues I184, D204, and R209 each contribute to the NAD(+) site. Phosphoserine occurs at positions 211 and 225. NAD(+)-binding positions include 273-275 and 297-299; these read VGL and VFR. Residues R299 and Y300 each contribute to the substrate site.

It belongs to the zinc-containing alcohol dehydrogenase family. Homotetramer. Zn(2+) is required as a cofactor. As to expression, expressed in liver. Expressed in kidney and epithelial cells of both benign and malignant prostate tissue. Expressed in epididymis (at protein level).

The protein resides in the mitochondrion membrane. It localises to the cell projection. It is found in the cilium. The protein localises to the flagellum. The catalysed reaction is keto-D-fructose + NADH + H(+) = D-sorbitol + NAD(+). The enzyme catalyses L-threitol + NAD(+) = L-erythrulose + NADH + H(+). It catalyses the reaction xylitol + NAD(+) = D-xylulose + NADH + H(+). It carries out the reaction ribitol + NAD(+) = D-ribulose + NADH + H(+). The catalysed reaction is (R,R)-butane-2,3-diol + NAD(+) = (R)-acetoin + NADH + H(+). The enzyme catalyses L-iditol + NAD(+) = keto-L-sorbose + NADH + H(+). Its activity is regulated as follows. Inhibited by CP-166,572, an inhibitor that is competitive with fructose. Also competitively inhibited by phenanthroline and 4-methylpyrazole in vitro. Polyol dehydrogenase that catalyzes the reversible NAD(+)-dependent oxidation of various sugar alcohols. Is mostly active with D-sorbitol (D-glucitol), L-threitol, xylitol and ribitol as substrates, leading to the C2-oxidized products D-fructose, L-erythrulose, D-xylulose, and D-ribulose, respectively. Is a key enzyme in the polyol pathway that interconverts glucose and fructose via sorbitol, which constitutes an important alternate route for glucose metabolism. The polyol pathway is believed to be involved in the etiology of diabetic complications, such as diabetic neuropathy and retinopathy, induced by hyperglycemia. May play a role in sperm motility by using sorbitol as an alternative energy source for sperm motility. May have a more general function in the metabolism of secondary alcohols since it also catalyzes the stereospecific oxidation of (2R,3R)-2,3-butanediol. To a lesser extent, can also oxidize L-arabinitol, galactitol and D-mannitol and glycerol in vitro. Oxidizes neither ethanol nor other primary alcohols. Cannot use NADP(+) as the electron acceptor. This Homo sapiens (Human) protein is Sorbitol dehydrogenase (SORD).